A 207-amino-acid polypeptide reads, in one-letter code: Pyridoxine/pyridoxamine 5'-phosphate oxidase (207 aa).

Residues 53 to 58 (RMVLLK), 68 to 69 (YT), K75, and Q97 contribute to the FMN site. Residue K58 participates in substrate binding. The substrate site is built by Y115, R119, and S123. Residues 132 to 133 (QS) and W177 contribute to the FMN site. Substrate is bound at residue 183 to 185 (RLH). R187 provides a ligand contact to FMN.

It belongs to the pyridoxamine 5'-phosphate oxidase family. As to quaternary structure, homodimer. It depends on FMN as a cofactor.

The catalysed reaction is pyridoxamine 5'-phosphate + O2 + H2O = pyridoxal 5'-phosphate + H2O2 + NH4(+). It catalyses the reaction pyridoxine 5'-phosphate + O2 = pyridoxal 5'-phosphate + H2O2. It participates in cofactor metabolism; pyridoxal 5'-phosphate salvage; pyridoxal 5'-phosphate from pyridoxamine 5'-phosphate: step 1/1. The protein operates within cofactor metabolism; pyridoxal 5'-phosphate salvage; pyridoxal 5'-phosphate from pyridoxine 5'-phosphate: step 1/1. Its function is as follows. Catalyzes the oxidation of either pyridoxine 5'-phosphate (PNP) or pyridoxamine 5'-phosphate (PMP) into pyridoxal 5'-phosphate (PLP). In Bartonella quintana (strain Toulouse) (Rochalimaea quintana), this protein is Pyridoxine/pyridoxamine 5'-phosphate oxidase.